The chain runs to 668 residues: DNA ligase (668 aa).

NAD(+) is bound by residues 34 to 38 (DAEYD), 83 to 84 (SL), and Glu-113. Residue Lys-115 is the N6-AMP-lysine intermediate of the active site. Positions 136, 170, 286, and 310 each coordinate NAD(+). Positions 404, 407, 422, and 427 each coordinate Zn(2+). Positions 590 to 668 (ESDSYFAGKT…EVKMLEELKK (79 aa)) constitute a BRCT domain.

It belongs to the NAD-dependent DNA ligase family. LigA subfamily. The cofactor is Mg(2+). Mn(2+) is required as a cofactor.

The catalysed reaction is NAD(+) + (deoxyribonucleotide)n-3'-hydroxyl + 5'-phospho-(deoxyribonucleotide)m = (deoxyribonucleotide)n+m + AMP + beta-nicotinamide D-nucleotide.. DNA ligase that catalyzes the formation of phosphodiester linkages between 5'-phosphoryl and 3'-hydroxyl groups in double-stranded DNA using NAD as a coenzyme and as the energy source for the reaction. It is essential for DNA replication and repair of damaged DNA. The sequence is that of DNA ligase from Bacillus pumilus (strain SAFR-032).